A 585-amino-acid chain; its full sequence is MAGUK p55 subfamily member 3 (585 aa).

2 consecutive L27 domains span residues 6 to 60 (EDSG…ERQS) and 61 to 118 (PTPV…FDPV). The PDZ domain occupies 137 to 218 (IVRLVKNKEP…SITLKIIPAT (82 aa)). Positions 226-296 (ESKVFMRALF…PSKQFQERRL (71 aa)) constitute an SH3 domain. S307 is modified (phosphoserine). Residues 385-570 (SRLVVLIGSL…VCSQLRAVIE (186 aa)) enclose the Guanylate kinase-like domain. The tract at residues 510–530 (KRKTPPVSPDSEDPATPLDEQ) is disordered.

It belongs to the MAGUK family. As to quaternary structure, interacts with HTR2C; this interaction stabilizes the receptor at the plasma membrane and prevents the desensitization of the HTR2C receptor-mediated calcium response. Interacts with HTR2A. Interacts with HTR4. Interacts (via PDZ domain) with CADM1 (via C-terminus)Interacts (via PDZ domain) with CADM1; this interaction connects CADM1 with DLG1. Interacts (via Guanylate kinase-like domain) with PALS1. Interacts with DLG1 (via N-terminus); this interaction connects CADM1 with DLG1 and links CADM1 with the regulatory subunit of phosphoinositide-3-kinase (PI3K) by forming a multiprotein complex and participates in cell spreading.

It is found in the apical cell membrane. It localises to the cell membrane. The protein resides in the cell junction. The protein localises to the adherens junction. Functionally, participates in cell spreading through the phosphoinositide-3-kinase (PI3K) pathway by connecting CADM1 to DLG1 and the regulatory subunit of phosphoinositide-3-kinase (PI3K). Stabilizes HTR2C at the plasma membrane and prevents its desensitization. May participates in the maintenance of adherens junctions. This Rattus norvegicus (Rat) protein is MAGUK p55 subfamily member 3.